Consider the following 159-residue polypeptide: Transcriptional repressor NrdR (159 aa).

A disordered region spans residues 1-21 (MRCPKCQHNKSNVIDSRQAED). Residues 3–34 (CPKCQHNKSNVIDSRQAEDGNTIRRRRECDAC) fold into a zinc finger. Positions 49 to 139 (LLVVKKDGTR…VYRSFKDVDE (91 aa)) constitute an ATP-cone domain.

It belongs to the NrdR family. The cofactor is Zn(2+).

Its function is as follows. Negatively regulates transcription of bacterial ribonucleotide reductase nrd genes and operons by binding to NrdR-boxes. The polypeptide is Transcriptional repressor NrdR (Streptococcus thermophilus (strain ATCC BAA-491 / LMD-9)).